Consider the following 647-residue polypeptide: DNA mismatch repair protein MutL (647 aa).

Belongs to the DNA mismatch repair MutL/HexB family.

Its function is as follows. This protein is involved in the repair of mismatches in DNA. It is required for dam-dependent methyl-directed DNA mismatch repair. May act as a 'molecular matchmaker', a protein that promotes the formation of a stable complex between two or more DNA-binding proteins in an ATP-dependent manner without itself being part of a final effector complex. The polypeptide is DNA mismatch repair protein MutL (Bacillus cereus (strain G9842)).